A 175-amino-acid chain; its full sequence is Transcriptional repressor NrdR (175 aa).

Residues 3-34 (CPICQDTNSRVLESRSAESGKSIRRRRECMNC) fold into a zinc finger. An ATP-cone domain is found at 49 to 139 (ITIIKRDGKK…VYRKFQGIRD (91 aa)).

This sequence belongs to the NrdR family. Zn(2+) is required as a cofactor.

In terms of biological role, negatively regulates transcription of bacterial ribonucleotide reductase nrd genes and operons by binding to NrdR-boxes. The chain is Transcriptional repressor NrdR from Trichodesmium erythraeum (strain IMS101).